Here is a 339-residue protein sequence, read N- to C-terminus: MVVKVGINGFGRIGRIVLRNAIEHGDLEVVAVNDPFIDLDYMVYMFKYDSTHGRFKGSVEVKDGKLYINNKAIAVFGEKDPANIKWGEAGAEYVVESTGVFTTTEKAGVHLKGGAKKVVISAPSADAPMFVCGVNLDAYKPEYQIVSNASCTTNCLAPLAKVIHDNFTIIEGLMTTVHATTATQKTVDGPSHKDWRGGRGAAANIIPSSTGAAKAVGKVIPSLNGKLTGMSFRVPTSDVSVVDLVCRIEKGASYEEIKNVIKKASESPELKGILGYTEDAVVSTDFIGSTESSIFDAQAGIALNANFVKLVSWYDNEYGYSRRVCDLISYIAGVDAKAQ.

NAD(+) contacts are provided by residues 12–13 (RI), Asp34, and Lys79. D-glyceraldehyde 3-phosphate contacts are provided by residues 150-152 (SCT), Thr181, 210-211 (TG), and Arg233. The Nucleophile role is filled by Cys151. Position 316 (Asn316) interacts with NAD(+).

Belongs to the glyceraldehyde-3-phosphate dehydrogenase family. As to quaternary structure, homotetramer.

The protein localises to the cytoplasm. It carries out the reaction D-glyceraldehyde 3-phosphate + phosphate + NAD(+) = (2R)-3-phospho-glyceroyl phosphate + NADH + H(+). Its pathway is carbohydrate degradation; glycolysis; pyruvate from D-glyceraldehyde 3-phosphate: step 1/5. In Cryptococcus neoformans var. neoformans serotype D (strain B-3501A) (Filobasidiella neoformans), this protein is Glyceraldehyde-3-phosphate dehydrogenase (GPD).